A 134-amino-acid chain; its full sequence is Profilin-4 (134 aa).

A disulfide bond links C13 and C118. The Involved in PIP2 interaction motif lies at 84–100 (AVIRGKKGSGGITIKKT). T114 carries the post-translational modification Phosphothreonine.

The protein belongs to the profilin family. Occurs in many kinds of cells as a complex with monomeric actin in a 1:1 ratio. Post-translationally, phosphorylated by MAP kinases.

The protein localises to the cytoplasm. It is found in the cytoskeleton. Functionally, binds to actin and affects the structure of the cytoskeleton. At high concentrations, profilin prevents the polymerization of actin, whereas it enhances it at low concentrations. In Olea europaea (Common olive), this protein is Profilin-4.